The sequence spans 827 residues: Beta-galactosidase 1 (827 aa).

A signal peptide spans 1 to 25 (MMGRRGSSWCRWWVALLVLAVAADA). Glu-187 functions as the Proton donor in the catalytic mechanism. N-linked (GlcNAc...) asparagine glycans are attached at residues Asn-198 and Asn-249. Residue Glu-259 is the Nucleophile of the active site. N-linked (GlcNAc...) asparagine glycosylation is found at Asn-260, Asn-366, Asn-392, Asn-502, Asn-520, Asn-578, Asn-586, and Asn-615. Residues 746-827 (GEAGDAVTLS…SGVLTVQATC (82 aa)) enclose the SUEL-type lectin domain.

It belongs to the glycosyl hydrolase 35 family.

It is found in the secreted. The protein resides in the extracellular space. Its subcellular location is the apoplast. The enzyme catalyses Hydrolysis of terminal non-reducing beta-D-galactose residues in beta-D-galactosides.. The protein is Beta-galactosidase 1 of Oryza sativa subsp. japonica (Rice).